Here is a 997-residue protein sequence, read N- to C-terminus: Sorting nexin-19 (997 aa).

The 179-residue stretch at 95-273 (ERQLEQEINR…ILVSIFSKYR (179 aa)) folds into the PXA domain. Disordered stretches follow at residues 313–333 (SSPATAPVHLTSSEPAPSPEI) and 413–437 (GALEPKDGEGSECMEGAEAEEAPGT). The span at 422–435 (GSECMEGAEAEEAP) shows a compositional bias: acidic residues. The region spanning 538–668 (LRITGTITAR…EFLALNTDAR (131 aa)) is the PX domain. Positions 587 and 634 each coordinate a 1,2-diacyl-sn-glycero-3-phospho-(1D-myo-inositol-3-phosphate). Positions 697-728 (FPRSEPQSPTEELSEAENESKPQTEGKKASKS) are disordered. Residues 714–724 (NESKPQTEGKK) show a composition bias toward basic and acidic residues.

This sequence belongs to the sorting nexin family. As to quaternary structure, interacts with PTPRN.

The protein localises to the early endosome membrane. It localises to the cytoplasmic vesicle membrane. Functionally, plays a role in intracellular vesicle trafficking and exocytosis. May play a role in maintaining insulin-containing dense core vesicles in pancreatic beta-cells and in preventing their degradation. May play a role in insulin secretion. Interacts with membranes containing phosphatidylinositol 3-phosphate (PtdIns(3P)). This is Sorting nexin-19 from Mus musculus (Mouse).